Here is a 204-residue protein sequence, read N- to C-terminus: Protein DESIGUAL 4 (204 aa).

The next 4 membrane-spanning stretches (helical) occupy residues 13–33 (IITV…VAGF), 60–80 (FVLG…ANVI), 107–127 (CLFL…NGIW), and 143–163 (VFSI…IYYI). The disordered stretch occupies residues 177 to 204 (KPNKTKPSELKPIPTEPNEAEPNSTPNP). Residue N179 is glycosylated (N-linked (GlcNAc...) asparagine).

The protein belongs to the DESIGUAL family. Only expressed in inflorescences.

It is found in the endoplasmic reticulum membrane. This chain is Protein DESIGUAL 4, found in Arabidopsis thaliana (Mouse-ear cress).